A 555-amino-acid chain; its full sequence is Arginine--tRNA ligase (555 aa).

The 'HIGH' region signature appears at alanine 117–histidine 127.

It belongs to the class-I aminoacyl-tRNA synthetase family.

Its subcellular location is the cytoplasm. The enzyme catalyses tRNA(Arg) + L-arginine + ATP = L-arginyl-tRNA(Arg) + AMP + diphosphate. This is Arginine--tRNA ligase from Methanospirillum hungatei JF-1 (strain ATCC 27890 / DSM 864 / NBRC 100397 / JF-1).